A 257-amino-acid polypeptide reads, in one-letter code: SQCKAMTVKFTVELDIERLTGQTYTDFIKNLRRSLATWYLHGVPVLPLYNQEADPRGFDLKLTFRGQVTTVRIHRDDLVLRGYQMQGAGKWLELERPSTQTGHLIEGSELLEFGPSYEELAAAAQQDILDISYNKNALQDAVSKLAVSTNTRDRARSLIVVSQMFCEATRFVDIANHFAFNLESSEPVKLPQWMQNDLEKNWVRFSFMILKSNADPCYKFEPQTIYGKIIKTADELLNFLGIVEQHPDTRSPPCAAG.

The active site involves glutamate 167. A disulfide bridge links cysteine 217 with cysteine 254.

It belongs to the ribosome-inactivating protein family. Type 1 RIP subfamily.

The enzyme catalyses Endohydrolysis of the N-glycosidic bond at one specific adenosine on the 28S rRNA.. Inhibits translation in rabbit reticulocytes. This is Ribosome-inactivating protein charybdin from Drimia maritima (Sea squill).